The sequence spans 407 residues: Na(+)-translocating NADH-quinone reductase subunit F (407 aa).

A helical membrane pass occupies residues 3-23 (IILGVVMFTLIVLALVLVILF). The 2Fe-2S ferredoxin-type domain maps to 32–126 (GDITISVNGD…DMDIELPEEI (95 aa)). 4 residues coordinate [2Fe-2S] cluster: Cys-69, Cys-75, Cys-78, and Cys-110. Positions 129–269 (VKKWECTVIS…SGPFGEFFAK (141 aa)) constitute an FAD-binding FR-type domain. Residues 272 to 389 (DAEMVFIGGG…PMMNAAVIGM (118 aa)) form a catalytic region.

It belongs to the NqrF family. Composed of six subunits; NqrA, NqrB, NqrC, NqrD, NqrE and NqrF. [2Fe-2S] cluster is required as a cofactor. The cofactor is FAD.

It localises to the cell inner membrane. The enzyme catalyses a ubiquinone + n Na(+)(in) + NADH + H(+) = a ubiquinol + n Na(+)(out) + NAD(+). In terms of biological role, NQR complex catalyzes the reduction of ubiquinone-1 to ubiquinol by two successive reactions, coupled with the transport of Na(+) ions from the cytoplasm to the periplasm. The first step is catalyzed by NqrF, which accepts electrons from NADH and reduces ubiquinone-1 to ubisemiquinone by a one-electron transfer pathway. This chain is Na(+)-translocating NADH-quinone reductase subunit F, found in Vibrio parahaemolyticus serotype O3:K6 (strain RIMD 2210633).